The following is a 174-amino-acid chain: ATP-dependent protease subunit HslV (174 aa).

The active site involves threonine 4. Na(+)-binding residues include alanine 159, cysteine 162, and threonine 165.

This sequence belongs to the peptidase T1B family. HslV subfamily. In terms of assembly, a double ring-shaped homohexamer of HslV is capped on each side by a ring-shaped HslU homohexamer. The assembly of the HslU/HslV complex is dependent on binding of ATP.

It localises to the cytoplasm. It carries out the reaction ATP-dependent cleavage of peptide bonds with broad specificity.. With respect to regulation, allosterically activated by HslU binding. In terms of biological role, protease subunit of a proteasome-like degradation complex believed to be a general protein degrading machinery. The polypeptide is ATP-dependent protease subunit HslV (Moorella thermoacetica (strain ATCC 39073 / JCM 9320)).